Consider the following 407-residue polypeptide: Nuclear hormone receptor family member nhr-86 (407 aa).

Residues 21–96 (KSTCSICRED…VGMNPAGVQQ (76 aa)) constitute a DNA-binding region (nuclear receptor). NR C4-type zinc fingers lie at residues 24 to 44 (CSIC…CRAC) and 60 to 79 (CRGN…CRSC). One can recognise an NR LBD domain in the interval 130–405 (AQSALVEDLH…KDFYDLVNGK (276 aa)). Residues 394–405 (PPKDFYDLVNGK) form an AF-2 region.

The protein belongs to the nuclear hormone receptor family. In terms of tissue distribution, expressed in intestinal epithelial cells, excretory gland cells and in several head neurons.

Its subcellular location is the nucleus. In terms of biological role, nuclear receptor which acts as a transcription activator. Binds small molecule ligands, such as phenazine 1-carboxamide (PCN), a pathogen-derived metabolite, leading to modulation of innate immune responses against virulent pathogens. On exposure to exogenous PCN, P.aeruginosa and other xenobiotic immunostimulant such as R24, activates immune response genes, including irg-4, irg-5, mul-1, drd-50, cyp-35C1 and ugt-30, probably via direct interaction with their promoters, and independent of the p38 MAPK pmk-1 pathway. Exhibits higher affinity to R24 than PCN and thus induces stronger immune response. Binds its own promoter thereby autoregulating its expression in the head hypodermis and the pharynx. Possibly plays a role in lipid storage or catabolism. This chain is Nuclear hormone receptor family member nhr-86 (nhr-86), found in Caenorhabditis elegans.